The following is a 397-amino-acid chain: Phosphoglycerate kinase (397 aa).

Residues 21–23 (DFN), R37, 60–63 (HLGR), R119, and R152 each bind substrate. ATP is bound by residues K203, G294, E325, and 354–357 (GGDS).

It belongs to the phosphoglycerate kinase family. As to quaternary structure, monomer.

Its subcellular location is the cytoplasm. It catalyses the reaction (2R)-3-phosphoglycerate + ATP = (2R)-3-phospho-glyceroyl phosphate + ADP. Its pathway is carbohydrate degradation; glycolysis; pyruvate from D-glyceraldehyde 3-phosphate: step 2/5. In Prosthecochloris aestuarii (strain DSM 271 / SK 413), this protein is Phosphoglycerate kinase.